The chain runs to 121 residues: Small ribosomal subunit protein uS13 (121 aa).

Positions 96-121 (PVRGQNTKNNARTRKGKAVAIAGKKK) are disordered. The segment covering 106 to 121 (ARTRKGKAVAIAGKKK) has biased composition (basic residues).

This sequence belongs to the universal ribosomal protein uS13 family. Part of the 30S ribosomal subunit. Forms a loose heterodimer with protein S19. Forms two bridges to the 50S subunit in the 70S ribosome.

Located at the top of the head of the 30S subunit, it contacts several helices of the 16S rRNA. In the 70S ribosome it contacts the 23S rRNA (bridge B1a) and protein L5 of the 50S subunit (bridge B1b), connecting the 2 subunits; these bridges are implicated in subunit movement. Contacts the tRNAs in the A and P-sites. The protein is Small ribosomal subunit protein uS13 of Streptococcus gordonii (strain Challis / ATCC 35105 / BCRC 15272 / CH1 / DL1 / V288).